A 496-amino-acid polypeptide reads, in one-letter code: Iroquois-class homeodomain protein irx-4-A (496 aa).

The segment at residues Gly141–Asn203 is a DNA-binding region (homeobox; TALE-type). The tract at residues Asn203–Asp246 is disordered. Over residues Asp221–Asp232 the composition is skewed to acidic residues.

The protein belongs to the TALE/IRO homeobox family. Expressed in the neural plate in overlapping patterns with other irx members, which all share an anterior border of expression. At stage 20, expressed in a subset of cells in the developing hindbrain with expression appearing above the otic vesicle by stage 26. Expression in retina cells begins at stage 28, continuing at later stages and is limited to a subset of retinal cells of the optic cup. Also expressed in the ventricle of the heart from stage 36 (late tailbud) onwards. Only expressed in the pronephros at tadpole stage.

The protein resides in the nucleus. Its function is as follows. Acts partially redundantly with other irx members in neural patterning. Required for formation of the posterior forebrain, midbrain, hindbrain, and to a lesser extent, spinal cord. Patterns the neuroectoderm in both the anterior/posterior and dorsal/ventral axes. Does not appear to play a role in pronephros kidney development. In Xenopus laevis (African clawed frog), this protein is Iroquois-class homeodomain protein irx-4-A (irx4-a).